A 95-amino-acid polypeptide reads, in one-letter code: Small ribosomal subunit protein bS6 (95 aa).

This sequence belongs to the bacterial ribosomal protein bS6 family.

Binds together with bS18 to 16S ribosomal RNA. The protein is Small ribosomal subunit protein bS6 of Desulfitobacterium hafniense (strain DSM 10664 / DCB-2).